Reading from the N-terminus, the 583-residue chain is R-linalool synthase QH5, chloroplastic (583 aa).

The transit peptide at 1–40 (MASISLFPYSILKQTSPLARGTAYNRIYSTKTTGITVDVA) directs the protein to the chloroplast. The (2E)-geranyl diphosphate site is built by Arg-298, Asp-335, Asp-339, Arg-476, and Asp-479. Residues Asp-335 and Asp-339 each coordinate Mg(2+). The DDXXD motif motif lies at 335–339 (DDVYD). Positions 479, 483, and 487 each coordinate Mg(2+). Asp-492 contacts K(+).

The protein belongs to the terpene synthase family. Tpsb subfamily. It depends on Mg(2+) as a cofactor. Mn(2+) serves as cofactor. Requires K(+) as cofactor. Expressed in every aerial organ except for the stem stele of mature plants. Not detected in roots.

It is found in the plastid. The protein localises to the chloroplast. It catalyses the reaction (2E)-geranyl diphosphate + H2O = (R)-linalool + diphosphate. Its pathway is secondary metabolite biosynthesis; terpenoid biosynthesis. Functionally, monoterpene synthase that catalyzes the formation of (3R)-linalool from geranyl diphosphate, but not from isopentenyl diphosphate, dimethylallyl diphosphate, chrysanthemyl diphosphate, farnesyl diphosphate, (+)-copalyl diphosphate or geranylgeranyl diphosphate. In Artemisia annua (Sweet wormwood), this protein is R-linalool synthase QH5, chloroplastic.